Reading from the N-terminus, the 156-residue chain is Translation initiation factor IF-1, chloroplastic (156 aa).

The tract at residues 1 to 35 (MAASLTLMTSPPCSRSSKSPSPSPSPSLSCNQQQQ) is disordered. A chloroplast-targeting transit peptide spans 1 to 49 (MAASLTLMTSPPCSRSSKSPSPSPSPSLSCNQQQQYKPLLHHQWPPQIS). The segment covering 10-20 (SPPCSRSSKSP) has biased composition (low complexity). The S1-like domain maps to 72-148 (GGSPSVQEQK…TRGRITYRLR (77 aa)).

It belongs to the IF-1 family. Component of the 30S ribosomal translation pre-initiation complex which assembles on the 30S ribosome in the order IF-2 and IF-3, IF-1 and N-formylmethionyl-tRNA(fMet); mRNA recruitment can occur at any time during PIC assembly.

The protein resides in the plastid. It localises to the chloroplast. Its function is as follows. One of the essential components for the initiation of protein synthesis. Stabilizes the binding of IF-2 and IF-3 on the 30S subunit to which N-formylmethionyl-tRNA(fMet) subsequently binds. Helps modulate mRNA selection, yielding the 30S pre-initiation complex (PIC). Upon addition of the 50S ribosomal subunit IF-1, IF-2 and IF-3 are released leaving the mature 70S translation initiation complex. This Mesembryanthemum crystallinum (Common ice plant) protein is Translation initiation factor IF-1, chloroplastic (infA).